The following is a 680-amino-acid chain: PAN2-PAN3 deadenylation complex subunit PAN3 (680 aa).

3 disordered regions span residues 1–26, 51–87, and 99–120; these read MATT…RADT, HDQT…SKKT, and FTPR…TDIP. Residues 25–54 form a C3H1-type zinc finger; the sequence is DTKDTLCRNILIYGHCRYEDAGCAFNHDQT. Residues 52–64 are compositionally biased toward basic and acidic residues; that stretch reads DQTKKSPKPDATT. Residues 62–82 carry the PABPC-interacting motif-2 (PAM-2) motif; that stretch reads ATTRKTLNVDSAPFTPAVSSQ. The span at 99–117 shows a compositional bias: low complexity; it reads FTPRATAATPTGTPTAQET. The tract at residues 256–522 is pseudokinase domain; sequence QTMTGTAALQ…TVKNLVAGIN (267 aa). ATP is bound by residues Arg-311, 360 to 367, and 422 to 423; these read EYYPLAET and TK. A coiled-coil region spans residues 523 to 561; it reads EHVMTAFDAQQRQSDMLYSELYREVENGRVLRLLMKLAT. The knob domain stretch occupies residues 562–680; it reads INERTEYDKD…VHHPSHRDRF (119 aa). The segment covering 655-669 has biased composition (gly residues); the sequence is SGNGRGGPVASGSGH. The disordered stretch occupies residues 655-680; the sequence is SGNGRGGPVASGSGHGVHHPSHRDRF. Positions 670 to 680 are enriched in basic residues; the sequence is GVHHPSHRDRF.

Belongs to the protein kinase superfamily. PAN3 family. Homodimer. Forms a heterotrimer with a catalytic subunit PAN2 to form the poly(A)-nuclease (PAN) deadenylation complex. Interacts (via PAM-2 motif) with poly(A)-binding protein PAB1 (via PABC domain), conferring substrate specificity of the enzyme complex.

The protein resides in the cytoplasm. In terms of biological role, regulatory subunit of the poly(A)-nuclease (PAN) deadenylation complex, one of two cytoplasmic mRNA deadenylases involved in mRNA turnover. PAN specifically shortens poly(A) tails of RNA and the activity is stimulated by poly(A)-binding protein PAB1. PAN deadenylation is followed by rapid degradation of the shortened mRNA tails by the CCR4-NOT complex. Deadenylated mRNAs are then degraded by two alternative mechanisms, namely exosome-mediated 3'-5' exonucleolytic degradation, or deadenylation-dependent mRNA decaping and subsequent 5'-3' exonucleolytic degradation by XRN1. May also be involved in post-transcriptional maturation of mRNA poly(A) tails. PAN3 acts as a positive regulator for PAN activity, recruiting the catalytic subunit PAN2 to mRNA via its interaction with RNA and with PAB1. The polypeptide is PAN2-PAN3 deadenylation complex subunit PAN3 (Pyricularia oryzae (strain 70-15 / ATCC MYA-4617 / FGSC 8958) (Rice blast fungus)).